Here is a 357-residue protein sequence, read N- to C-terminus: Putative F-box protein At5g50220 (357 aa).

The 47-residue stretch at 27–73 (IAEDIGIPIDLMVEILKKLPAKSLIKFQCVSKQWSSIIGSSRDFIDS) folds into the F-box domain.

The chain is Putative F-box protein At5g50220 from Arabidopsis thaliana (Mouse-ear cress).